The primary structure comprises 269 residues: Phosphatidylglycerophosphate phosphatase 1, chloroplastic (269 aa).

A chloroplast-targeting transit peptide spans 1–33 (MRSVPGPSPPCTRSLAHSCRAAARGPCGSARPR). Residues 25–46 (GPCGSARPRARSVSARAHSSEA) form a disordered region. Over residues 29–46 (SARPRARSVSARAHSSEA) the composition is skewed to low complexity. Residues 103 to 107 (DKDNT) carry the Phosphoryl acceptor motif.

The protein belongs to the HAD-like hydrolase superfamily.

It localises to the plastid. Its subcellular location is the chloroplast. It carries out the reaction a 1,2-diacyl-sn-glycero-3-phospho-(1'-sn-glycero-3'-phosphate) + H2O = a 1,2-diacyl-sn-glycero-3-phospho-(1'-sn-glycerol) + phosphate. Its pathway is phospholipid metabolism; phosphatidylglycerol biosynthesis; phosphatidylglycerol from CDP-diacylglycerol: step 2/2. Its function is as follows. Phosphatidylglycerophosphate phosphatase involved in the biosynthesis of phosphatidylglycerol (PG), a phosphoglycerolipid predominantly present in chloroplastic thylakoid membranes and which has important photosynthetic function. Required for thylakoid membranes development and chloroplast function. This chain is Phosphatidylglycerophosphate phosphatase 1, chloroplastic, found in Chlamydomonas reinhardtii (Chlamydomonas smithii).